The primary structure comprises 463 residues: Glycerol-3-phosphate acyltransferase, chloroplastic (463 aa).

Residues 1–91 (MSIFFSPSSP…AATQPSAGSD (91 aa)) constitute a chloroplast transit peptide. 2 disordered regions span residues 18–37 (NANP…TPPL) and 65–95 (AETV…HGHS). Low complexity-rich tracts occupy residues 24–37 (SPSS…TPPL) and 74–90 (PSPS…SAGS). An HXXXXD motif motif is present at residues 229–234 (HQTEAD).

The protein belongs to the GPAT/DAPAT family.

The protein localises to the plastid. Its subcellular location is the chloroplast stroma. The catalysed reaction is sn-glycerol 3-phosphate + an acyl-CoA = a 1-acyl-sn-glycero-3-phosphate + CoA. It functions in the pathway phospholipid metabolism; CDP-diacylglycerol biosynthesis; CDP-diacylglycerol from sn-glycerol 3-phosphate: step 1/3. Esterifies acyl-group from acyl-ACP to the sn-1 position of glycerol-3-phosphate. The enzyme from chilling-resistant plants discriminates against non-fluid palmitic acid and selects oleic acid whereas the enzyme from sensitive plants accepts both fatty acids. The sequence is that of Glycerol-3-phosphate acyltransferase, chloroplastic from Carthamus tinctorius (Safflower).